Reading from the N-terminus, the 167-residue chain is Small ribosomal subunit protein uS5 (167 aa).

The S5 DRBM domain occupies 12 to 75 (LQEKLIAVNR…EKARRNMVTV (64 aa)).

The protein belongs to the universal ribosomal protein uS5 family. Part of the 30S ribosomal subunit. Contacts proteins S4 and S8.

Functionally, with S4 and S12 plays an important role in translational accuracy. In terms of biological role, located at the back of the 30S subunit body where it stabilizes the conformation of the head with respect to the body. The sequence is that of Small ribosomal subunit protein uS5 from Shewanella sp. (strain W3-18-1).